Here is a 203-residue protein sequence, read N- to C-terminus: Outer-membrane lipoprotein carrier protein (203 aa).

Positions 1-20 (MKKWLAISCLIAGMTSTAVY) are cleaved as a signal peptide.

It belongs to the LolA family. As to quaternary structure, monomer.

It is found in the periplasm. Its function is as follows. Participates in the translocation of lipoproteins from the inner membrane to the outer membrane. Only forms a complex with a lipoprotein if the residue after the N-terminal Cys is not an aspartate (The Asp acts as a targeting signal to indicate that the lipoprotein should stay in the inner membrane). The polypeptide is Outer-membrane lipoprotein carrier protein (Pectobacterium carotovorum subsp. carotovorum (strain PC1)).